Here is a 570-residue protein sequence, read N- to C-terminus: Urease subunit alpha (570 aa).

Residues 132–570 form the Urease domain; the sequence is GGIDTHVHFL…VPMARRYFLF (439 aa). Positions 137, 139, and 220 each coordinate Ni(2+). The residue at position 220 (lysine 220) is an N6-carboxylysine. Residue histidine 222 participates in substrate binding. Residues histidine 249 and histidine 275 each contribute to the Ni(2+) site. The active-site Proton donor is the histidine 323. Aspartate 363 is a Ni(2+) binding site.

The protein belongs to the metallo-dependent hydrolases superfamily. Urease alpha subunit family. As to quaternary structure, heterotrimer of UreA (gamma), UreB (beta) and UreC (alpha) subunits. Three heterotrimers associate to form the active enzyme. Ni cation is required as a cofactor. Carboxylation allows a single lysine to coordinate two nickel ions.

The protein localises to the cytoplasm. The catalysed reaction is urea + 2 H2O + H(+) = hydrogencarbonate + 2 NH4(+). It functions in the pathway nitrogen metabolism; urea degradation; CO(2) and NH(3) from urea (urease route): step 1/1. This chain is Urease subunit alpha, found in Corynebacterium glutamicum (strain ATCC 13032 / DSM 20300 / JCM 1318 / BCRC 11384 / CCUG 27702 / LMG 3730 / NBRC 12168 / NCIMB 10025 / NRRL B-2784 / 534).